A 914-amino-acid chain; its full sequence is Valine--tRNA ligase (914 aa).

The 'HIGH' region signature appears at 47–57 (PYPTGELHMGH). The 'KMSKS' region signature appears at 552–556 (KMSKS). K555 provides a ligand contact to ATP.

This sequence belongs to the class-I aminoacyl-tRNA synthetase family. ValS type 2 subfamily.

The protein localises to the cytoplasm. It catalyses the reaction tRNA(Val) + L-valine + ATP = L-valyl-tRNA(Val) + AMP + diphosphate. Functionally, catalyzes the attachment of valine to tRNA(Val). As ValRS can inadvertently accommodate and process structurally similar amino acids such as threonine, to avoid such errors, it has a 'posttransfer' editing activity that hydrolyzes mischarged Thr-tRNA(Val) in a tRNA-dependent manner. The chain is Valine--tRNA ligase from Methanopyrus kandleri (strain AV19 / DSM 6324 / JCM 9639 / NBRC 100938).